We begin with the raw amino-acid sequence, 136 residues long: MTERTLVLIKPDGVQRRLVGEILGRIERKGLTLAALELKTVDDELARRHYAEHEGKPFFGSLLEFITSGPVVAAIVEGPRAIAAFRQIAGGTDPVEKATPGTIRADLALVTQDNLVHGSDSPESAAREIDLWFPGR.

ATP is bound by residues K10, F58, R86, T92, R104, and N114. H117 acts as the Pros-phosphohistidine intermediate in catalysis.

This sequence belongs to the NDK family. Homotetramer. The cofactor is Mg(2+).

Its subcellular location is the cytoplasm. The catalysed reaction is a 2'-deoxyribonucleoside 5'-diphosphate + ATP = a 2'-deoxyribonucleoside 5'-triphosphate + ADP. It catalyses the reaction a ribonucleoside 5'-diphosphate + ATP = a ribonucleoside 5'-triphosphate + ADP. Functionally, major role in the synthesis of nucleoside triphosphates other than ATP. The ATP gamma phosphate is transferred to the NDP beta phosphate via a ping-pong mechanism, using a phosphorylated active-site intermediate. The protein is Nucleoside diphosphate kinase of Mycobacterium sp. (strain MCS).